The chain runs to 512 residues: Putative aldehyde-dehydrogenase-like protein y4uC (512 aa).

The interval 14–41 (MKPERGRRSPLPRRPTRPPDERSSGIGN) is disordered. 266–271 (GGFATG) is an NADP(+) binding site. Active-site residues include Glu286 and Cys320.

It belongs to the aldehyde dehydrogenase family.

It participates in amino-acid degradation; 4-aminobutanoate degradation. Functionally, could be a succinate-semialdehyde dehydrogenase (NADP(+)). The polypeptide is Putative aldehyde-dehydrogenase-like protein y4uC (Sinorhizobium fredii (strain NBRC 101917 / NGR234)).